A 61-amino-acid polypeptide reads, in one-letter code: Photosystem II reaction center protein Z (61 aa).

Helical transmembrane passes span 5–25 (LTALLVLISLGLIVTVPVALA) and 38–58 (TKGFQAWVALVLVIAAADGVA).

Belongs to the PsbZ family. PSII is composed of 1 copy each of membrane proteins PsbA, PsbB, PsbC, PsbD, PsbE, PsbF, PsbH, PsbI, PsbJ, PsbK, PsbL, PsbM, PsbT, PsbX, PsbY, PsbZ, Psb30/Ycf12, at least 3 peripheral proteins of the oxygen-evolving complex and a large number of cofactors. It forms dimeric complexes.

The protein resides in the plastid. The protein localises to the chloroplast thylakoid membrane. May control the interaction of photosystem II (PSII) cores with the light-harvesting antenna, regulates electron flow through the 2 photosystem reaction centers. PSII is a light-driven water plastoquinone oxidoreductase, using light energy to abstract electrons from H(2)O, generating a proton gradient subsequently used for ATP formation. The chain is Photosystem II reaction center protein Z from Phaeodactylum tricornutum (strain CCAP 1055/1).